The primary structure comprises 614 residues: Zinc finger protein 276 (614 aa).

Residues 1 to 50 form a disordered region; sequence MKRDRLGRFLSPGSSRQCGASDGGGGVSRTRGRPSLSGGPRVDGATARRA. Positions 77-163 constitute a ZAD domain; sequence GHCRLCHGKF…LQRVNASPAG (87 aa). Zn(2+) is bound by residues Cys79, Cys82, Cys136, and Cys139. A disordered region spans residues 268 to 420; that stretch reads APRLPQHRGW…KKPGPKPGWK (153 aa). Residues 357–369 show a composition bias toward acidic residues; the sequence is SDLSEGDVLSEDE. Basic and acidic residues predominate over residues 386–408; that stretch reads YPERKVSGKKSESKEAKKSEEPR. Over residues 409 to 420 the composition is skewed to basic residues; the sequence is IRKKPGPKPGWK. 5 C2H2-type zinc fingers span residues 434–458, 465–490, 496–518, 524–546, and 554–577; these read YKCP…IKEH, RPCP…KLIH, YICD…QMRH, LQCE…MTKH, and FACD…SMVH. Residues 583–614 are disordered; the sequence is QDKALPLEAEPPPGPPSPSVTTEGQAVKPEPT. The segment covering 591–600 has biased composition (pro residues); sequence AEPPPGPPSP.

It localises to the nucleus. Its subcellular location is the chromosome. The protein localises to the centromere. The protein resides in the kinetochore. May be involved in transcriptional regulation. The protein is Zinc finger protein 276 (ZNF276) of Homo sapiens (Human).